A 664-amino-acid polypeptide reads, in one-letter code: PAN2-PAN3 deadenylation complex subunit PAN3 (664 aa).

Disordered stretches follow at residues 1-27 and 54-134; these read MATT…GREN and DPHK…PGTM. The C3H1-type zinc-finger motif lies at 27-56; that stretch reads NAKDTLCRNVTIYGRCRYEDKGCAFNHDPH. Over residues 74–96 the composition is skewed to polar residues; sequence DSPSFTPSILSSNGSSPTSQSAT. Over residues 115-131 the composition is skewed to low complexity; the sequence is PRSISSRSNSSTPTTRP. The segment at 265–525 is pseudokinase domain; sequence QTLPNTQLPA…NIDIFITGIS (261 aa). ATP contacts are provided by residues arginine 317, 366 to 373, and 425 to 426; these read DYHPLSKT and SK. The stretch at 526-564 forms a coiled coil; that stretch reads STLMSTFDSALHLDDQLTSDLSRELENGRLVRLMTKLNF. Residues 565–664 form a knob domain region; that stretch reads VNERPEYEHD…LKPSASRRLH (100 aa).

The protein belongs to the protein kinase superfamily. PAN3 family. In terms of assembly, homodimer. Forms a heterotrimer with a catalytic subunit pan2 to form the poly(A)-nuclease (PAN) deadenylation complex. Interacts (via PAM-2 motif) with poly(A)-binding protein pab1 (via PABC domain), conferring substrate specificity of the enzyme complex.

Its subcellular location is the cytoplasm. Regulatory subunit of the poly(A)-nuclease (PAN) deadenylation complex, one of two cytoplasmic mRNA deadenylases involved in mRNA turnover. PAN specifically shortens poly(A) tails of RNA and the activity is stimulated by poly(A)-binding protein pab1. PAN deadenylation is followed by rapid degradation of the shortened mRNA tails by the CCR4-NOT complex. Deadenylated mRNAs are then degraded by two alternative mechanisms, namely exosome-mediated 3'-5' exonucleolytic degradation, or deadenylation-dependent mRNA decaping and subsequent 5'-3' exonucleolytic degradation by xrn1. May also be involved in post-transcriptional maturation of mRNA poly(A) tails. pan3 acts as a positive regulator for PAN activity, recruiting the catalytic subunit pan2 to mRNA via its interaction with RNA and with pab1. The protein is PAN2-PAN3 deadenylation complex subunit PAN3 of Aspergillus niger (strain ATCC MYA-4892 / CBS 513.88 / FGSC A1513).